A 128-amino-acid chain; its full sequence is Ribonuclease P protein component (128 aa).

The protein belongs to the RnpA family. Consists of a catalytic RNA component (M1 or rnpB) and a protein subunit.

It carries out the reaction Endonucleolytic cleavage of RNA, removing 5'-extranucleotides from tRNA precursor.. In terms of biological role, RNaseP catalyzes the removal of the 5'-leader sequence from pre-tRNA to produce the mature 5'-terminus. It can also cleave other RNA substrates such as 4.5S RNA. The protein component plays an auxiliary but essential role in vivo by binding to the 5'-leader sequence and broadening the substrate specificity of the ribozyme. This chain is Ribonuclease P protein component, found in Mycoplasma genitalium (strain ATCC 33530 / DSM 19775 / NCTC 10195 / G37) (Mycoplasmoides genitalium).